The chain runs to 308 residues: Porphobilinogen deaminase (308 aa).

At C242 the chain carries S-(dipyrrolylmethanemethyl)cysteine.

The protein belongs to the HMBS family. In terms of assembly, monomer. It depends on dipyrromethane as a cofactor.

The enzyme catalyses 4 porphobilinogen + H2O = hydroxymethylbilane + 4 NH4(+). It functions in the pathway porphyrin-containing compound metabolism; protoporphyrin-IX biosynthesis; coproporphyrinogen-III from 5-aminolevulinate: step 2/4. Functionally, tetrapolymerization of the monopyrrole PBG into the hydroxymethylbilane pre-uroporphyrinogen in several discrete steps. This chain is Porphobilinogen deaminase, found in Alkalilimnicola ehrlichii (strain ATCC BAA-1101 / DSM 17681 / MLHE-1).